The chain runs to 248 residues: 3-deoxy-manno-octulosonate cytidylyltransferase (248 aa).

The protein belongs to the KdsB family.

Its subcellular location is the cytoplasm. The catalysed reaction is 3-deoxy-alpha-D-manno-oct-2-ulosonate + CTP = CMP-3-deoxy-beta-D-manno-octulosonate + diphosphate. Its pathway is nucleotide-sugar biosynthesis; CMP-3-deoxy-D-manno-octulosonate biosynthesis; CMP-3-deoxy-D-manno-octulosonate from 3-deoxy-D-manno-octulosonate and CTP: step 1/1. It participates in bacterial outer membrane biogenesis; lipopolysaccharide biosynthesis. Activates KDO (a required 8-carbon sugar) for incorporation into bacterial lipopolysaccharide in Gram-negative bacteria. In Chlorobaculum parvum (strain DSM 263 / NCIMB 8327) (Chlorobium vibrioforme subsp. thiosulfatophilum), this protein is 3-deoxy-manno-octulosonate cytidylyltransferase.